The primary structure comprises 1479 residues: MDDSPWPQCDIRVQDTFGPQVSGCYEDFDFTLLFEESILYLPPLLIAASVALLRIWQLRSTENLLKRSGLLSILKPTSTTRLSNAAIAIGFVASPIFAWLSFWEHARSLRPSTILNVYLLGTIPMDAARARTLFRMPGNSAIASIFATIVVCKVVLLVVEAMEKQRLLLDRGWAPEETAGILNRSFLWWFNPLLLSGYKQALTVDKLLAVDEDIGVEKSKDEIRRRWAQAVKQNASSLQDVLLAVYRTELWGGFLPRLCLIGVNYAQPFLVNRVVTFLGQPDTSTSRGVASGLIAAYAIVYMGIAVATAAFHHRSYRMVMMVRGGLILLIYDHTLTLNALSPSKNDSYTLITADIERIVSGLRSLHETWASLIEIALSLWLLETKIRVSAVAAAMVVLVCLLVSGALSGLLGVHQNLWLEAMQKRLNATLATIGSIKGIKATGRTNTLYETILQLRRTEIQKSLKFRELLVALVTLSYLSTTMAPTFAFGTYSILAKIRNMTPLLAAPAFSSLTIMTLLGQAVSGFVESLMGLRQAMASLERIRQYLVGKEAPEPSPNKPGVASTEGLVAWSASLDEPGLDPRVEMRRMSSLQHRFYNLGELQDGLIVLQNHTASWEKASKPVLTDINVTITRGSFVIVIGPIGSGKSTLLHSILGEVPHTTGIRTIQEVDTAFCAQTPWLTNTNVRDNILGASHFDPAWYNAVVKACALHRDFAQLPHGDRSMIGSKGILLSGGQKGRLALARALYARKALLVLDDVFAGLDPKTGQEVFTSLFGARGLLRQGKTTTVLATNSTQNLSMADYIMVLGSEGRLIEQGTPTELLNSGSSLRLEELVKTREGKSKAEPERERPEYARALRNSVLGATPVAARRRFSDMAIYKLYIRTIGWGSWWIFIVLCSGFVVALTLSRENTLALPSACAGVDLLTACLEEIWLKFWTEANARNPHDRLGYYLSLFAVWSALAITFFLGACLHLMLRMVPKAAKIFHGSLLQTVMRAPLVFFSKTDSGEISNHFSQDLELIDMELPRALIGAVIALILCISAMAVIVYSSNYLAATIPGLLGLLYLVQMFYLRTSQQLRVLELETRAPLLSHYMETIQGLVSLRAFGWSKHFKDRHHGHLKVAQQSAYLLFCAQIWLTLTLDIIVAFLAIILVSIAVTVKNSSAASIGLALVNLIAFGANMKGLVYNWTALENAMGAIARVRDFTTETPCEIQVGESHSPSPGWPQRGLIKFKSVTASYDFTSHPVLNDVTFTVQPGEKLAICGRTGCGKSSLVSSLLRLLEVRNGAIEVDGIDISTLSREDVRMSLNVLPQEPFFYHGTIRQNLDPNCLSSDEEILETLALLGLREVISKKGGLDVAMDDGFLSHGQQQLLCLARAILKKSRILILDEVTSSVDQETETLITRVLRDRLQDQTVISIAHRLNTIMDYDKVIILDKGCIVEQGNPQVLALQRSIFASLLRSGDEEPGNGHKHESEGEEE.

3 helical membrane-spanning segments follow: residues 32-52, 82-102, and 142-162; these read LLFE…SVAL, LSNA…WLSF, and IASI…VEAM. N-linked (GlcNAc...) asparagine glycosylation is found at Asn-183 and Asn-234. 2 helical membrane-spanning segments follow: residues 251–271 and 291–311; these read WGGF…PFLV and SGLI…TAAF. The ABC transmembrane type-1 1 domain occupies 258 to 535; sequence LCLIGVNYAQ…FVESLMGLRQ (278 aa). N-linked (GlcNAc...) asparagine glycosylation is present at Asn-345. 2 helical membrane passes run 365–382 and 391–411; these read LHET…LWLL and VAAA…SGLL. N-linked (GlcNAc...) asparagine glycosylation is present at Asn-427. Transmembrane regions (helical) follow at residues 469 to 489 and 503 to 523; these read LLVA…TFAF and PLLA…GQAV. The region spanning 607 to 835 is the ABC transporter 1 domain; sequence IVLQNHTASW…GSSLRLEELV (229 aa). 2 N-linked (GlcNAc...) asparagine glycosylation sites follow: Asn-611 and Asn-628. 641-648 is an ATP binding site; the sequence is GPIGSGKS. 2 N-linked (GlcNAc...) asparagine glycosylation sites follow: Asn-793 and Asn-797. 5 helical membrane-spanning segments follow: residues 885 to 905, 955 to 975, 1028 to 1048, 1052 to 1072, and 1135 to 1155; these read TIGW…VVAL, LFAV…LHLM, ALIG…VIVY, YLAA…MFYL, and IWLT…LVSI. The 262-residue stretch at 932–1193 folds into the ABC transmembrane type-1 2 domain; it reads IWLKFWTEAN…LVYNWTALEN (262 aa). Asn-1161 carries an N-linked (GlcNAc...) asparagine glycan. A helical transmembrane segment spans residues 1165-1185; that stretch reads ASIGLALVNLIAFGANMKGLV. The N-linked (GlcNAc...) asparagine glycan is linked to Asn-1187. The ABC transporter 2 domain occupies 1230-1461; it reads IKFKSVTASY…RSIFASLLRS (232 aa). An ATP-binding site is contributed by 1264–1271; it reads GRTGCGKS. Residues 1460–1479 form a disordered region; it reads RSGDEEPGNGHKHESEGEEE. The span at 1461 to 1479 shows a compositional bias: basic and acidic residues; the sequence is SGDEEPGNGHKHESEGEEE.

Belongs to the ABC transporter superfamily. ABCC family. Conjugate transporter (TC 3.A.1.208) subfamily.

It localises to the cell membrane. In terms of biological role, ABC transporter; part of the gene cluster that mediates the biosynthesis of echinocandin B, a fungal lipidated cyclic hexapeptide that acts as an antifungal agent. In Aspergillus rugulosus (Emericella rugulosa), this protein is ABC transporter ecdL.